A 64-amino-acid polypeptide reads, in one-letter code: Alpha-conotoxin CnIC (64 aa).

An N-terminal signal peptide occupies residues 1-21 (MGMRMMFTVFLLVVLTTTVVS). Positions 22 to 47 (FPSDSASDVRDDEAKDERSDMYKSKR) are excised as a propeptide. N48 is subject to Deamidated asparagine; in CnIH; partial. Cystine bridges form between C51–C56 and C52–C62. The residue at position 62 (C62) is a Cysteine amide.

This sequence belongs to the conotoxin A superfamily. As to expression, expressed by the venom duct.

The protein localises to the secreted. Its function is as follows. Alpha-conotoxins act on postsynaptic membranes, they bind to the nicotinic acetylcholine receptors (nAChR) and thus inhibit them. This is Alpha-conotoxin CnIC from Conus consors (Singed cone).